A 145-amino-acid chain; its full sequence is Major pollen allergen Lig v 1 (145 aa).

Intrachain disulfides connect cysteine 19-cysteine 90, cysteine 22-cysteine 131, and cysteine 43-cysteine 78. Asparagine 111 carries an N-linked (GlcNAc...) asparagine glycan.

It belongs to the Ole e I family.

The protein localises to the secreted. The chain is Major pollen allergen Lig v 1 from Ligustrum vulgare (Common privet).